A 146-amino-acid polypeptide reads, in one-letter code: Large ribosomal subunit protein uL13 (146 aa).

Belongs to the universal ribosomal protein uL13 family. Part of the 50S ribosomal subunit.

Its function is as follows. This protein is one of the early assembly proteins of the 50S ribosomal subunit, although it is not seen to bind rRNA by itself. It is important during the early stages of 50S assembly. In Bdellovibrio bacteriovorus (strain ATCC 15356 / DSM 50701 / NCIMB 9529 / HD100), this protein is Large ribosomal subunit protein uL13.